Consider the following 67-residue polypeptide: Beta-defensin 123 (67 aa).

An N-terminal signal peptide occupies residues 1-20 (MKLLLLTLTVLLLLSQLTPG). Cystine bridges form between cysteine 25–cysteine 52, cysteine 32–cysteine 46, and cysteine 36–cysteine 53.

It belongs to the beta-defensin family.

The protein localises to the secreted. In terms of biological role, has antibacterial activity. The polypeptide is Beta-defensin 123 (DEFB123) (Pongo pygmaeus (Bornean orangutan)).